A 714-amino-acid chain; its full sequence is MKRSIVFIYSLVILLLSVGFIDAFKISIENHIKLSDDSSYQIGTGIYDITGPGAETNMMGYAMPGQITGGIHFRQRARAFVFIDSEGNRAVYVSTDSCMIFQEVKIQVIQDLQEIFGPTLYTHDNVLLSGTHTHSGPAGFSEYALYGITALGFYKKNFDTICDGIVQAIVKAHKSVQPARMLTQQGELWNSNINRSPYAYDNNPEEEKAMYDANVDKNMTVIRIEDMSGNPFAAISFFGVHCTSMNNTNHLISGDNKGYASYLWEKHANGQSSLPGTGPFIAAFGQSNEGDVSPNTRGPTCRDGKPCDYKTSTCNGKVEECWALGPGTDGDMFESTQIIGGNQFNKALELFNNATIQVSGKIQYRHTWKPFTNVSVEAPYNSGVEGATTCRGAMGYSFAGGTTDGPGAFNFIQGDNSTTNPFWNFIGGIIAKPTPQQTACQAPKPILIDVGMVEPIPWVPDVMPLQIITLGQIVLVAVPGEFTTMSGRRLRNTVREIIGQSIENPIVLIAGLANTYSGYIATFEEFQVQRYEGASTVFGPHTLGAYQQEFANLAQSIVDGSQADPGTFPRNMSGHTPFFLPPVIVDVAPKFDDFGDIYTDVSTTTPYSINQTVTVIFYGANLRNNFMTESSFLTVDQLQSNGQWTTILNDGDWDTKLYWKMHDLGFSLITVDWTISPITQPGTYRITHSGYAKKNPFSDNLTFYQGISSNFNVQ.

A signal peptide spans 1–23; the sequence is MKRSIVFIYSLVILLLSVGFIDA. N-linked (GlcNAc...) asparagine glycans are attached at residues Asn218 and Asn246. Ser293 (nucleophile) is an active-site residue. Asn353, Asn373, Asn416, Asn571, Asn610, and Asn700 each carry an N-linked (GlcNAc...) asparagine glycan.

Belongs to the neutral ceramidase family.

The protein localises to the secreted. The enzyme catalyses an N-acylsphing-4-enine + H2O = sphing-4-enine + a fatty acid. Functionally, hydrolyzes the sphingolipid ceramide into sphingosine and free fatty acid at an optimal pH of 3.0. Has no activity toward glycosphingolipids, such as GalCer and Galbeta1-3GalNAcbeta1-4(NeuAcalpha2-3)Galbeta1-4Glcbeta1-1'Cer or sphingomyelin. This Dictyostelium discoideum (Social amoeba) protein is Neutral ceramidase A (dcd2A).